A 294-amino-acid chain; its full sequence is Ribosomal protein L11 methyltransferase (294 aa).

S-adenosyl-L-methionine contacts are provided by Thr145, Gly166, Asp188, and Asn230.

It belongs to the methyltransferase superfamily. PrmA family.

The protein localises to the cytoplasm. The catalysed reaction is L-lysyl-[protein] + 3 S-adenosyl-L-methionine = N(6),N(6),N(6)-trimethyl-L-lysyl-[protein] + 3 S-adenosyl-L-homocysteine + 3 H(+). Functionally, methylates ribosomal protein L11. This is Ribosomal protein L11 methyltransferase from Glaesserella parasuis serovar 5 (strain SH0165) (Haemophilus parasuis).